The following is a 259-amino-acid chain: Probable 6-phosphogluconolactonase 2 (259 aa).

This sequence belongs to the glucosamine/galactosamine-6-phosphate isomerase family. 6-phosphogluconolactonase subfamily.

It localises to the cytoplasm. Its subcellular location is the cytosol. It catalyses the reaction 6-phospho-D-glucono-1,5-lactone + H2O = 6-phospho-D-gluconate + H(+). Its pathway is carbohydrate degradation; pentose phosphate pathway; D-ribulose 5-phosphate from D-glucose 6-phosphate (oxidative stage): step 2/3. Catalyzes the hydrolysis of 6-phosphogluconolactone to 6-phosphogluconate. This is Probable 6-phosphogluconolactonase 2 from Arabidopsis thaliana (Mouse-ear cress).